A 557-amino-acid polypeptide reads, in one-letter code: Glypican-1 (557 aa).

The signal sequence occupies residues Met1–Gly23. 7 cysteine pairs are disulfide-bonded: Cys32-Cys68, Cys62-Cys255, Cys69-Cys258, Cys190-Cys342, Cys245-Cys278, Cys267-Cys414, and Cys271-Cys400. Residues Asn79 and Asn116 are each glycosylated (N-linked (GlcNAc...) asparagine). Residues Phe477–Ala531 are disordered. O-linked (Xyl...) (heparan sulfate) serine glycosylation is found at Ser485, Ser487, and Ser489. Ser529 carries GPI-anchor amidated serine lipidation. The propeptide at Ala530 to Arg557 is removed in mature form.

It belongs to the glypican family. Post-translationally, S-nitrosylated in a Cu(2+)-dependent manner. Nitric acid (NO) is released from the nitrosylated cysteines by ascorbate or by some other reducing agent, in a Cu(2+) or Zn(2+) dependent manner. This free nitric oxide is then capable of cleaving the heparan sulfate side chains. N- and O-glycosylated. N-glycosylation is mainly of the complex type containing sialic acid. O-glycosylated with heparan sulfate. The heparan sulfate chains can be cleaved either by the action of heparanase or, degraded by a deaminative process that uses nitric oxide (NO) released from the S-nitrosylated cysteines. This process is triggered by ascorbate, or by some other reducing agent, in a Cu(2+)- or Zn(2+) dependent manner. Cu(2+) ions are provided by ceruloproteins such as APP, PRNP or CP which associate with GCP1 in intracellular compartments or lipid rafts. In terms of processing, this cell-associated glypican is further processed to give rise to a medium-released species.

Its subcellular location is the cell membrane. It is found in the endosome. The protein resides in the secreted. The protein localises to the extracellular space. In terms of biological role, cell surface proteoglycan that bears heparan sulfate. Binds, via the heparan sulfate side chains, alpha-4 (V) collagen and participates in Schwann cell myelination. May act as a catalyst in increasing the rate of conversion of prion protein PRPN(C) to PRNP(Sc) via associating (via the heparan sulfate side chains) with both forms of PRPN, targeting them to lipid rafts and facilitating their interaction. Required for proper skeletal muscle differentiation by sequestering FGF2 in lipid rafts preventing its binding to receptors (FGFRs) and inhibiting the FGF-mediated signaling. Binds Cu(2+) or Zn(2+) ions. The protein is Glypican-1 (Gpc1) of Mus musculus (Mouse).